A 421-amino-acid polypeptide reads, in one-letter code: Membrane-associated protein UidC (421 aa).

Residues 1–23 (MRKIVAMAVICLTAASGLTSAYA) form the signal peptide.

Belongs to the outer membrane porin (Opr) (TC 1.B.25) family.

The protein localises to the cell outer membrane. Functionally, enhances the activity of the UidB (GusB) glucuronide transporter, on its own however it has no transport activity. Glucuronide transport does not occur in strain K12 due to a variant at position 100 of the UidB (GusB, AC P0CE44, AC P0CE45) protein. This Escherichia coli (strain K12) protein is Membrane-associated protein UidC (uidC).